We begin with the raw amino-acid sequence, 231 residues long: Uracil-DNA glycosylase (231 aa).

Residue aspartate 74 is the Proton acceptor of the active site.

Belongs to the uracil-DNA glycosylase (UDG) superfamily. UNG family.

Its subcellular location is the cytoplasm. The catalysed reaction is Hydrolyzes single-stranded DNA or mismatched double-stranded DNA and polynucleotides, releasing free uracil.. Its function is as follows. Excises uracil residues from the DNA which can arise as a result of misincorporation of dUMP residues by DNA polymerase or due to deamination of cytosine. This is Uracil-DNA glycosylase from Campylobacter jejuni subsp. jejuni serotype O:23/36 (strain 81-176).